Consider the following 875-residue polypeptide: Serine/threonine-protein phosphatase 4 regulatory subunit 4 (875 aa).

HEAT repeat units follow at residues 215–253 and 254–292; these read ILPLVKSLCQDVEYEVRSCMCRQLENIAQGIGAELTKNV and VLPELIELSRDESGSVRLAAFETLVNMLDMFDTDDRSQT. A coiled-coil region spans residues 686-730; the sequence is MFQKKNYEKDLLDQEKEREELLFLEMEQLEKEKHQSDGRLASDKS. Basic and acidic residues predominate over residues 718–739; the sequence is KHQSDGRLASDKSFEKKRRDSR. Positions 718-773 are disordered; the sequence is KHQSDGRLASDKSFEKKRRDSRTSTQSLSKNLPISVPGPSSSTASTSKEIKKSKLT. Residues 740–764 show a composition bias toward polar residues; the sequence is TSTQSLSKNLPISVPGPSSSTASTS. Residue serine 777 is modified to Phosphoserine. Threonine 799 carries the phosphothreonine modification. Residues 825–859 are compositionally biased toward polar residues; the sequence is RNASSVPASFSPNPVMPSTSRGPGNTADPKSSGSK. The disordered stretch occupies residues 825-875; it reads RNASSVPASFSPNPVMPSTSRGPGNTADPKSSGSKDAQPRKATLKSRKSNP. Residues 866–875 show a composition bias toward basic residues; sequence ATLKSRKSNP.

Serine/threonine-protein phosphatase 4 (PP4) occurs in different assemblies of the catalytic and one or more regulatory subunits. Component of the PP4 complex PPP4C-PPP4R4.

The protein resides in the cytoplasm. Its function is as follows. Putative regulatory subunit of serine/threonine-protein phosphatase 4. The polypeptide is Serine/threonine-protein phosphatase 4 regulatory subunit 4 (Ppp4r4) (Mus musculus (Mouse)).